Consider the following 117-residue polypeptide: Hainantoxin-XV-2 (117 aa).

Residues 1-20 form the signal peptide; the sequence is MKLCAVIIASLLVCVAVASS. The segment at 20 to 55 is disordered; it reads SSDNQKEFAQEKEMTREETQSLGEHEKDDEVTGSEE. A propeptide spanning residues 21–56 is cleaved from the precursor; it reads SDNQKEFAQEKEMTREETQSLGEHEKDDEVTGSEER. A compositionally biased stretch (basic and acidic residues) spans 23 to 55; sequence NQKEFAQEKEMTREETQSLGEHEKDDEVTGSEE. Intrachain disulfides connect cysteine 58–cysteine 72, cysteine 65–cysteine 78, cysteine 69–cysteine 115, and cysteine 71–cysteine 91.

Belongs to the neurotoxin 03 (Tx2) family. 02 subfamily. HNTX-XV sub-subfamily. Expressed by the venom gland.

The protein localises to the secreted. In terms of biological role, putative ion channel inhibitor. This Cyriopagopus hainanus (Chinese bird spider) protein is Hainantoxin-XV-2.